The chain runs to 433 residues: MSAKKLFIQTLGCAMNVRDSEHMIAELTQKENYALTEDIKEADLILINTCSVREKPVHKLFSEVGGFEKVKKEGAKIGVCGCTASHLGNEIFKRAPYVDFVLGARNISKITQAIKTPKFMGVDIDYDESEFAFADFRNSIYKSYINISIGCDKHCTYCIVPHTRGDEISIPFNIIYKEAQKAIEKGAKEIFLLGQNVNNYGKRFRNEHKKMDFSDLLEELSTIEGLERIRFTSPHPLHMDDKFLEVFANNPKVCKSMHMPLQSGSSEILKAMKRGYTKEWYLNRALKLRELCPNVSISTDIIVAFPGESEKDFEETVDVLEKVRFEQIFSFKYSKRPLTKAATMPNQIDEEIASRRLSTLQNRHSEILDKIVKKQENKTFKVLFEELRAGNSIAGRTDNNFLVQVEGSEELLGQFKEVKITNAKRMVLYGEIV.

The 116-residue stretch at 4 to 119 (KKLFIQTLGC…ITQAIKTPKF (116 aa)) folds into the MTTase N-terminal domain. Residues Cys13, Cys50, Cys82, Cys151, Cys155, and Cys158 each contribute to the [4Fe-4S] cluster site. The region spanning 137–370 (RNSIYKSYIN…QNRHSEILDK (234 aa)) is the Radical SAM core domain. In terms of domain architecture, TRAM spans 373 to 433 (KKQENKTFKV…KRMVLYGEIV (61 aa)).

Belongs to the methylthiotransferase family. MiaB subfamily. As to quaternary structure, monomer. [4Fe-4S] cluster is required as a cofactor.

Its subcellular location is the cytoplasm. The catalysed reaction is N(6)-dimethylallyladenosine(37) in tRNA + (sulfur carrier)-SH + AH2 + 2 S-adenosyl-L-methionine = 2-methylsulfanyl-N(6)-dimethylallyladenosine(37) in tRNA + (sulfur carrier)-H + 5'-deoxyadenosine + L-methionine + A + S-adenosyl-L-homocysteine + 2 H(+). Catalyzes the methylthiolation of N6-(dimethylallyl)adenosine (i(6)A), leading to the formation of 2-methylthio-N6-(dimethylallyl)adenosine (ms(2)i(6)A) at position 37 in tRNAs that read codons beginning with uridine. In Campylobacter jejuni subsp. jejuni serotype O:2 (strain ATCC 700819 / NCTC 11168), this protein is tRNA-2-methylthio-N(6)-dimethylallyladenosine synthase.